Reading from the N-terminus, the 479-residue chain is MVRIQRRKLLASCLCVTATVFLLVTLQVMVELGKFERKEFKSSSLQDGHTKMEEAPTHLNSFLKKEGLTFNRKRKWELDSYPIMLWWSPLTGETGRLGQCGADACFFTINRTYLHHHMTKAFLFYGTDFNIDSLPLPRKAHHDWAVFHEESPKNNYKLFHKPVITLFNYTATFSRHSHLPLTTQYLESIEVLKSLRYLVPLQSKNKLRKRLAPLVYVQSDCDPPSDRDSYVRELMTYIEVDSYGECLRNKDLPQQLKNPASMDADGFYRIIAQYKFILAFENAVCDDYITEKFWRPLKLGVVPVYYGSPSITDWLPSNKSAILVSEFSHPRELASYIRRLDSDDRLYEAYVEWKLKGEISNQRLLTALRERKWGVQDVNQDNYIDAFECMVCTKVWANIRLQEKGLPPKRWEAEDTHLSCPEPTVFAFSPLRTPPLSSLREMWISSFEQSKKEAQALRWLVDRNQNFSSQEFWGLVFKD.

Residues 1 to 8 (MVRIQRRK) are Cytoplasmic-facing. Residues 9–31 (LLASCLCVTATVFLLVTLQVMVE) form a helical; Signal-anchor for type II membrane protein membrane-spanning segment. The Lumenal portion of the chain corresponds to 32-479 (LGKFERKEFK…QEFWGLVFKD (448 aa)). 2 N-linked (GlcNAc...) asparagine glycosylation sites follow: Asn110 and Asn168. Cys389 and Cys392 are oxidised to a cystine.

The protein belongs to the glycosyltransferase 10 family. Expressed in lung, digestive tract, gall bladder, placenta, kidney, uterus and brain. Not detected in spleen, heart, muscle, liver and pancreas.

The protein resides in the endoplasmic reticulum membrane. Its subcellular location is the golgi apparatus membrane. It localises to the golgi apparatus. It is found in the lysosome. It carries out the reaction L-threonyl-[protein] + GDP-beta-L-fucose = 3-O-(alpha-L-fucosyl)-L-threonyl-[protein] + GDP + H(+). The enzyme catalyses L-seryl-[protein] + GDP-beta-L-fucose = 3-O-(alpha-L-fucosyl)-L-seryl-[protein] + GDP + H(+). It functions in the pathway protein modification; protein glycosylation. Protein O-fucosyltransferase that specifically catalyzes O-fucosylation of serine or threonine residues in EMI domains of target proteins, such as MMRN1, MMRN2 and EMID1. Attaches fucose through an O-glycosidic linkage. O-fucosylation of EMI domain-containing proteins may be required for facilitating protein folding and secretion. May also show alpha-(1,3)-fucosyltransferase activity toward the innermost N-acetyl glucosamine (GlcNAc) residue in biantennary N-glycan acceptors. However, this was tested with a library of synthetic substrates and this activity is unsure in vivo. May be involved in biosynthesis of Lewis X-carrying biantennary N-glycans that regulate neuron stem cell self-renewal during brain development. The chain is GDP-fucose protein O-fucosyltransferase 3 from Homo sapiens (Human).